Reading from the N-terminus, the 191-residue chain is Protein Ves (191 aa).

Belongs to the Ves family.

The polypeptide is Protein Ves (Escherichia coli O127:H6 (strain E2348/69 / EPEC)).